Consider the following 123-residue polypeptide: UPF0102 protein SPO0400 (123 aa).

This sequence belongs to the UPF0102 family.

This is UPF0102 protein SPO0400 from Ruegeria pomeroyi (strain ATCC 700808 / DSM 15171 / DSS-3) (Silicibacter pomeroyi).